A 223-amino-acid polypeptide reads, in one-letter code: Ribose-5-phosphate isomerase A (223 aa).

Substrate is bound by residues Thr-32–Thr-35, Asp-83–Asp-86, and Lys-96–Gly-99. Glu-105 functions as the Proton acceptor in the catalytic mechanism. Lys-123 contacts substrate.

It belongs to the ribose 5-phosphate isomerase family. Homodimer.

The catalysed reaction is aldehydo-D-ribose 5-phosphate = D-ribulose 5-phosphate. Its pathway is carbohydrate degradation; pentose phosphate pathway; D-ribose 5-phosphate from D-ribulose 5-phosphate (non-oxidative stage): step 1/1. In terms of biological role, catalyzes the reversible conversion of ribose-5-phosphate to ribulose 5-phosphate. The sequence is that of Ribose-5-phosphate isomerase A from Acinetobacter baumannii (strain AYE).